The primary structure comprises 370 residues: tRNA-specific 2-thiouridylase MnmA (370 aa).

Residues 9–16 (GMSGGVDS) and methionine 35 each bind ATP. The tract at residues 95-97 (NPD) is interaction with target base in tRNA. The active-site Nucleophile is cysteine 100. Cysteine 100 and cysteine 196 are oxidised to a cystine. Glycine 124 serves as a coordination point for ATP. Positions 146 to 148 (KDQ) are interaction with tRNA. Cysteine 196 serves as the catalytic Cysteine persulfide intermediate. Residues 308–309 (RY) are interaction with tRNA.

It belongs to the MnmA/TRMU family.

It localises to the cytoplasm. It catalyses the reaction S-sulfanyl-L-cysteinyl-[protein] + uridine(34) in tRNA + AH2 + ATP = 2-thiouridine(34) in tRNA + L-cysteinyl-[protein] + A + AMP + diphosphate + H(+). Functionally, catalyzes the 2-thiolation of uridine at the wobble position (U34) of tRNA, leading to the formation of s(2)U34. The sequence is that of tRNA-specific 2-thiouridylase MnmA from Ralstonia pickettii (strain 12J).